The chain runs to 119 residues: Protein Wnt-4 (119 aa).

Ser-1 is lipidated: O-palmitoleoyl serine; by PORCN. 2 cysteine pairs are disulfide-bonded: Cys-69/Cys-100 and Cys-85/Cys-95. A glycan (N-linked (GlcNAc...) asparagine) is linked at Asn-86.

It belongs to the Wnt family. Post-translationally, palmitoleoylation is required for efficient binding to frizzled receptors. Depalmitoleoylation leads to Wnt signaling pathway inhibition.

The protein resides in the secreted. Its subcellular location is the extracellular space. It localises to the extracellular matrix. Functionally, ligand for members of the frizzled family of seven transmembrane receptors. Plays an important role in embryonic development. This is Protein Wnt-4 (WNT-4) from Sceloporus occidentalis (Western fence lizard).